A 148-amino-acid polypeptide reads, in one-letter code: MRRMDKVDLQLIKILSQNSRLTYRELAEMLGTTRQRVARKVDKLKKLGIIRKFTIIPNLEKLNYMYAILLIKVKATENIYQVAKVLKDHEDVKILELGVGKYNIIAHVLVPKDIKKAQEKVNDVIKEINGIEDLEVEFVSDIPKFELL.

Residues 4–65 enclose the HTH asnC-type domain; the sequence is MDKVDLQLIK…IPNLEKLNYM (62 aa). Positions 23–42 form a DNA-binding region, H-T-H motif; sequence YRELAEMLGTTRQRVARKVD.

This is an uncharacterized protein from Pyrococcus furiosus (strain ATCC 43587 / DSM 3638 / JCM 8422 / Vc1).